The primary structure comprises 499 residues: Glycerol kinase (499 aa).

Threonine 12 contacts ADP. Residues threonine 12, threonine 13, and serine 14 each contribute to the ATP site. A sn-glycerol 3-phosphate-binding site is contributed by threonine 12. Arginine 16 contacts ADP. Positions 82, 83, and 134 each coordinate sn-glycerol 3-phosphate. Positions 82, 83, and 134 each coordinate glycerol. Residue histidine 230 is modified to Phosphohistidine; by HPr. Aspartate 244 contacts sn-glycerol 3-phosphate. Glycerol contacts are provided by aspartate 244 and glutamine 245. ADP-binding residues include threonine 266 and glycine 309. ATP is bound by residues threonine 266, glycine 309, glutamine 313, and glycine 410. ADP-binding residues include glycine 410 and asparagine 414.

It belongs to the FGGY kinase family. In terms of assembly, homotetramer and homodimer (in equilibrium). In terms of processing, the phosphoenolpyruvate-dependent sugar phosphotransferase system (PTS), including enzyme I, and histidine-containing protein (HPr) are required for the phosphorylation, which leads to the activation of the enzyme.

The catalysed reaction is glycerol + ATP = sn-glycerol 3-phosphate + ADP + H(+). It participates in polyol metabolism; glycerol degradation via glycerol kinase pathway; sn-glycerol 3-phosphate from glycerol: step 1/1. Activated by phosphorylation and inhibited by fructose 1,6-bisphosphate (FBP). Its function is as follows. Key enzyme in the regulation of glycerol uptake and metabolism. Catalyzes the phosphorylation of glycerol to yield sn-glycerol 3-phosphate. This Staphylococcus haemolyticus (strain JCSC1435) protein is Glycerol kinase.